A 27-amino-acid chain; its full sequence is Pregnancy-associated glycoprotein 62 (27 aa).

It belongs to the peptidase A1 family. In terms of processing, glycosylated. As to expression, placenta.

The sequence is that of Pregnancy-associated glycoprotein 62 (PAG62) from Capra hircus (Goat).